A 513-amino-acid chain; its full sequence is Histidine ammonia-lyase (513 aa).

The 5-imidazolinone (Ala-Gly) cross-link spans 144 to 146; it reads ASG. Ser145 is subject to 2,3-didehydroalanine (Ser).

Belongs to the PAL/histidase family. Contains an active site 4-methylidene-imidazol-5-one (MIO), which is formed autocatalytically by cyclization and dehydration of residues Ala-Ser-Gly.

Its subcellular location is the cytoplasm. The catalysed reaction is L-histidine = trans-urocanate + NH4(+). The protein operates within amino-acid degradation; L-histidine degradation into L-glutamate; N-formimidoyl-L-glutamate from L-histidine: step 1/3. The chain is Histidine ammonia-lyase from Streptococcus pyogenes serotype M6 (strain ATCC BAA-946 / MGAS10394).